A 168-amino-acid chain; its full sequence is Small ribosomal subunit protein uS5 (168 aa).

In terms of domain architecture, S5 DRBM spans 13–76 (LAEKLIAVNR…EKARRNMINV (64 aa)).

It belongs to the universal ribosomal protein uS5 family. In terms of assembly, part of the 30S ribosomal subunit. Contacts proteins S4 and S8.

In terms of biological role, with S4 and S12 plays an important role in translational accuracy. Functionally, located at the back of the 30S subunit body where it stabilizes the conformation of the head with respect to the body. The sequence is that of Small ribosomal subunit protein uS5 from Pseudoalteromonas translucida (strain TAC 125).